Consider the following 650-residue polypeptide: Threonine--tRNA ligase (650 aa).

A TGS domain is found at 1 to 61; sequence MIKITFPDGA…DEDGTLEIVM (61 aa). Residues 242–540 form a catalytic region; sequence DHRKLGKELD…LIETYKGAFP (299 aa). Cysteine 336, histidine 387, and histidine 517 together coordinate Zn(2+).

Belongs to the class-II aminoacyl-tRNA synthetase family. In terms of assembly, homodimer. Requires Zn(2+) as cofactor.

The protein resides in the cytoplasm. The enzyme catalyses tRNA(Thr) + L-threonine + ATP = L-threonyl-tRNA(Thr) + AMP + diphosphate + H(+). Catalyzes the attachment of threonine to tRNA(Thr) in a two-step reaction: L-threonine is first activated by ATP to form Thr-AMP and then transferred to the acceptor end of tRNA(Thr). Also edits incorrectly charged L-seryl-tRNA(Thr). In Streptococcus suis (strain 98HAH33), this protein is Threonine--tRNA ligase.